The primary structure comprises 452 residues: Class E vacuolar protein-sorting machinery protein HSE1 (452 aa).

N-acetylserine is present on Ser-2. The region spanning 15-145 is the VHS domain; the sequence is ATDPKLRSDN…KIKRKAPYLV (131 aa). Disordered regions lie at residues 144 to 166 and 187 to 212; these read LVQP…DDEE and QEKE…PAHK. Ser-162 bears the Phosphoserine mark. Residues 162–181 form the UIM domain; sequence SDDEELQKALKMSLFEYEKQ. Residues 197–207 show a composition bias toward low complexity; it reads QQQQQHQQQNQ. The region spanning 217 to 276 is the SH3 domain; it reads TVVRRVRALYDLTTNEPDELSFRKGDVITVLEQVYRDWWKGALRGNMGIFPLNYVTPIVE. Positions 389–452 are disordered; it reads AGMTHANNTP…VSQPPPGYEQ (64 aa). Over residues 393-433 the composition is skewed to polar residues; that stretch reads HANNTPVMPPQRQSYQSNEYSPYPSNLPIQHPTNSANNTPQ.

This sequence belongs to the STAM family. Component of the ESCRT-0 complex composed of HSE1 and VPS27. Interacts with the ESCRT-I subunit VPS23, the UBP7 deubiquitinase and the E3 ligase RSP5. May form a complex composed of VPS27, HSE1 and DOA1. Interacts (via SH3 domain) with DOA1.

It localises to the endosome membrane. Component of the ESCRT-0 complex which is the sorting receptor for ubiquitinated cargo proteins at the multivesicular body (MVB) and recruits ESCRT-I to the MVB outer membrane. This Saccharomyces cerevisiae (strain ATCC 204508 / S288c) (Baker's yeast) protein is Class E vacuolar protein-sorting machinery protein HSE1 (HSE1).